The following is a 500-amino-acid chain: Lycopene beta cyclase, chloroplastic (500 aa).

The N-terminal 81 residues, 1–81 (MDTLLKTPNK…ELPMYDPSKG (81 aa)), are a transit peptide targeting the chloroplast. 86 to 114 (LAVVGGGPAGLAVAQQVSEAGLSVVSIDP) is an NAD(+) binding site.

Belongs to the lycopene cyclase family.

The protein resides in the plastid. It localises to the chloroplast. The catalysed reaction is a carotenoid psi-end group = a carotenoid beta-end derivative. It participates in carotenoid biosynthesis; beta-carotene biosynthesis. The protein operates within carotenoid biosynthesis; beta-zeacarotene biosynthesis. Catalyzes the double cyclization reaction which converts lycopene to beta-carotene and neurosporene to beta-zeacarotene. The polypeptide is Lycopene beta cyclase, chloroplastic (LCY1) (Nicotiana tabacum (Common tobacco)).